We begin with the raw amino-acid sequence, 141 residues long: Flagellar assembly factor FliW (141 aa).

The protein belongs to the FliW family. As to quaternary structure, interacts with translational regulator CsrA and flagellin(s).

It is found in the cytoplasm. In terms of biological role, acts as an anti-CsrA protein, binds CsrA and prevents it from repressing translation of its target genes, one of which is flagellin. Binds to flagellin and participates in the assembly of the flagellum. This Clostridium botulinum (strain Alaska E43 / Type E3) protein is Flagellar assembly factor FliW.